Here is a 783-residue protein sequence, read N- to C-terminus: Transcription factor Sp3 (783 aa).

A compositionally biased stretch (basic and acidic residues) spans Met1–Glu12. The disordered stretch occupies residues Met1 to Pro55. Gly residues predominate over residues Asp19–Gly28. Low complexity predominate over residues Glu29–Gln51. Position 72 is a phosphoserine (Ser72). Lys122 is covalently cross-linked (Glycyl lysine isopeptide (Lys-Gly) (interchain with G-Cter in SUMO)). A transactivation domain (Gln-rich) region spans residues Gln140 to Gln239. The segment at Gly302–Gln340 is disordered. The span at Asn310–Ser319 shows a compositional bias: basic and acidic residues. Polar residues predominate over residues Val322–Gln340. Residues Gln352–Gln501 form a transactivation domain (Gln-rich) region. Positions Ile463–Gln471 match the 9aaTAD motif. The tract at residues Ile536 to Gln622 is repressor domain. Residue Lys553 is modified to N6-acetyllysine; alternate. A Glycyl lysine isopeptide (Lys-Gly) (interchain with G-Cter in SUMO); alternate cross-link involves residue Lys553. A Glycyl lysine isopeptide (Lys-Gly) (interchain with G-Cter in SUMO1); alternate cross-link involves residue Lys553. Lys553 participates in a covalent cross-link: Glycyl lysine isopeptide (Lys-Gly) (interchain with G-Cter in SUMO2); alternate. 2 positions are modified to phosphoserine: Ser565 and Ser568. A Glycyl lysine isopeptide (Lys-Gly) (interchain with G-Cter in SUMO2) cross-link involves residue Lys595. Residues His623–His647 form a C2H2-type 1 zinc finger. Ser648 carries the post-translational modification Phosphoserine. 2 C2H2-type zinc fingers span residues Phe653–His677 and Phe683–His705.

This sequence belongs to the Sp1 C2H2-type zinc-finger protein family. In terms of assembly, interacts with HLTF; the interaction may be required for basal transcriptional activity of HLTF. Interacts with HDAC1; the interaction deacetylates SP3 and regulates its transcriptional activity. Interacts with HDAC2 (preferably the CK2-phosphorylated form); the interaction deacetylates SP3 and regulates its transcriptional activity. Ceramides can also regulate acetylation/deacetylation events through altering the interaction of HDAC with SP3. Interacts with MEIS2 isoform Meis2D and PBX1 isoform PBX1a. Post-translationally, acetylated by histone acetyltransferase p300, deacetylated by HDACs. Acetylation/deacetylation states regulate transcriptional activity. Acetylation appears to activate transcription. Alternate sumoylation and acetylation at Lys-553 also control transcriptional activity. Sumoylated on all isoforms. Sumoylated on 2 sites in longer isoforms with Lys-553 being the major site. Sumoylation at this site promotes nuclear localization to the nuclear periphery, nuclear dots and PML nuclear bodies. Sumoylation on Lys-553 represses the transactivation activity, except for the largest isoform which has little effect on transactivation. Alternate sumoylation and acetylation at Lys-553 also control transcriptional activity.

The protein resides in the nucleus. It is found in the PML body. In terms of biological role, transcriptional factor that can act as an activator or repressor depending on isoform and/or post-translational modifications. Binds to GT and GC boxes promoter elements. Competes with SP1 for the GC-box promoters. Weak activator of transcription but can activate a number of genes involved in different processes such as cell-cycle regulation, hormone-induction and house-keeping. The chain is Transcription factor Sp3 (Sp3) from Mus musculus (Mouse).